The primary structure comprises 456 residues: GPI-anchored protein 13 (456 aa).

The signal sequence occupies residues 1–23; the sequence is MRSPSLAVAATTVLGLFSSSALA. An N-linked (GlcNAc...) asparagine glycan is attached at Asn-27. A lipid anchor (GPI-anchor amidated glycine) is attached at Gly-433. The propeptide at 434 to 456 is removed in mature form; the sequence is AAAVNVVPTTAFGLFAIILASIF.

The GPI-anchor is attached to the protein in the endoplasmic reticulum and serves to target the protein to the cell surface. There, the glucosamine-inositol phospholipid moiety is cleaved off and the GPI-modified mannoprotein is covalently attached via its lipidless GPI glycan remnant to the 1,6-beta-glucan of the outer cell wall layer.

The protein resides in the secreted. It localises to the cell wall. It is found in the membrane. Cell wall protein which contributes to cell wall synthesis and is important for acquiring normal surface properties. Required for virulence in a mouse infection model. In Candida albicans (strain SC5314 / ATCC MYA-2876) (Yeast), this protein is GPI-anchored protein 13 (PGA13).